The sequence spans 1228 residues: Ribosomal RNA-processing protein 12 (1228 aa).

Residues S1059 and S1067 each carry the phosphoserine modification. Residues G1168–L1228 are disordered. Residues I1212–L1228 are compositionally biased toward basic residues.

The protein belongs to the RRP12 family. Interacts with GSP1.

It localises to the cytoplasm. Its subcellular location is the nucleus. The protein localises to the nucleolus. In terms of biological role, in association with GSP1, required for nuclear export of both pre-40S and pre-60S ribosomal subunits. Required for the late maturation of the 18S and 5.8S rRNA of the pre-40S ribosomes and for maturation of the 25S and 5.8S rRNA of the pre-60S ribosomes. This is Ribosomal RNA-processing protein 12 (RRP12) from Saccharomyces cerevisiae (strain ATCC 204508 / S288c) (Baker's yeast).